Consider the following 361-residue polypeptide: Aminomethyltransferase (361 aa).

The protein belongs to the GcvT family. As to quaternary structure, the glycine cleavage system is composed of four proteins: P, T, L and H.

It catalyses the reaction N(6)-[(R)-S(8)-aminomethyldihydrolipoyl]-L-lysyl-[protein] + (6S)-5,6,7,8-tetrahydrofolate = N(6)-[(R)-dihydrolipoyl]-L-lysyl-[protein] + (6R)-5,10-methylene-5,6,7,8-tetrahydrofolate + NH4(+). Functionally, the glycine cleavage system catalyzes the degradation of glycine. In Bacteroides fragilis (strain ATCC 25285 / DSM 2151 / CCUG 4856 / JCM 11019 / LMG 10263 / NCTC 9343 / Onslow / VPI 2553 / EN-2), this protein is Aminomethyltransferase.